A 247-amino-acid chain; its full sequence is Ribosomal RNA small subunit methyltransferase J (247 aa).

S-adenosyl-L-methionine-binding positions include 101–102, 117–118, 153–154, and D171; these read RD, ER, and SS.

The protein belongs to the methyltransferase superfamily. RsmJ family.

Its subcellular location is the cytoplasm. The enzyme catalyses guanosine(1516) in 16S rRNA + S-adenosyl-L-methionine = N(2)-methylguanosine(1516) in 16S rRNA + S-adenosyl-L-homocysteine + H(+). Functionally, specifically methylates the guanosine in position 1516 of 16S rRNA. The chain is Ribosomal RNA small subunit methyltransferase J from Photorhabdus laumondii subsp. laumondii (strain DSM 15139 / CIP 105565 / TT01) (Photorhabdus luminescens subsp. laumondii).